The sequence spans 325 residues: Glycerol-3-phosphate dehydrogenase [NAD(P)+] (325 aa).

S14, F15, R35, and K109 together coordinate NADPH. Sn-glycerol 3-phosphate-binding residues include K109 and G137. An NADPH-binding site is contributed by A141. Sn-glycerol 3-phosphate contacts are provided by K192, D247, S257, R258, and N259. K192 functions as the Proton acceptor in the catalytic mechanism. Position 258 (R258) interacts with NADPH. NADPH contacts are provided by L282 and E284.

The protein belongs to the NAD-dependent glycerol-3-phosphate dehydrogenase family.

Its subcellular location is the cytoplasm. It carries out the reaction sn-glycerol 3-phosphate + NAD(+) = dihydroxyacetone phosphate + NADH + H(+). The catalysed reaction is sn-glycerol 3-phosphate + NADP(+) = dihydroxyacetone phosphate + NADPH + H(+). It participates in membrane lipid metabolism; glycerophospholipid metabolism. Catalyzes the reduction of the glycolytic intermediate dihydroxyacetone phosphate (DHAP) to sn-glycerol 3-phosphate (G3P), the key precursor for phospholipid synthesis. The polypeptide is Glycerol-3-phosphate dehydrogenase [NAD(P)+] (Rickettsia africae (strain ESF-5)).